The sequence spans 387 residues: BarH-like 2 homeobox protein (387 aa).

3 disordered regions span residues Met1 to Lys145, Cys157 to Ser240, and Pro367 to Arg387. The span at Ser7 to Ser24 shows a compositional bias: polar residues. Residues Ala100 to Gln113 show a composition bias toward low complexity. Residues Pro114–Gln126 are compositionally biased toward pro residues. Positions Gln127–Ser141 are enriched in low complexity. Residues Tyr160–Val178 are compositionally biased toward polar residues. A compositionally biased stretch (basic and acidic residues) spans Glu180–Ser220. Positions Pro232–Thr291 form a DNA-binding region, homeobox.

Belongs to the BAR homeobox family.

Its subcellular location is the nucleus. Potential regulator of neural basic helix-loop-helix genes. This is BarH-like 2 homeobox protein (BARHL2) from Homo sapiens (Human).